A 146-amino-acid chain; its full sequence is Holo-[acyl-carrier-protein] synthase (146 aa).

Mg(2+) is bound by residues aspartate 9 and glutamate 63.

It belongs to the P-Pant transferase superfamily. AcpS family. The cofactor is Mg(2+).

The protein resides in the cytoplasm. It catalyses the reaction apo-[ACP] + CoA = holo-[ACP] + adenosine 3',5'-bisphosphate + H(+). In terms of biological role, transfers the 4'-phosphopantetheine moiety from coenzyme A to a Ser of acyl-carrier-protein. This Burkholderia ambifaria (strain MC40-6) protein is Holo-[acyl-carrier-protein] synthase.